Here is a 227-residue protein sequence, read N- to C-terminus: UPF0173 metal-dependent hydrolase Cmaq_1073 (227 aa).

It belongs to the UPF0173 family.

This chain is UPF0173 metal-dependent hydrolase Cmaq_1073, found in Caldivirga maquilingensis (strain ATCC 700844 / DSM 13496 / JCM 10307 / IC-167).